The following is a 426-amino-acid chain: Nucleolar protein 12 (426 aa).

A disordered region spans residues 26-128 (QSSGPVDTLE…SKRASRPDMK (103 aa)). Residues 87–105 (LEEKYMQQVLKEDSDHESE) are compositionally biased toward basic and acidic residues. RRM domains follow at residues 137–251 (RTVF…SVAH) and 259–339 (RSVF…RCRN). Residues 401–415 (KARSKTGRVTKRSQA) show a composition bias toward basic residues. The interval 401 to 426 (KARSKTGRVTKRSQAFKKAEANKKQK) is disordered. Residues 417 to 426 (KKAEANKKQK) are compositionally biased toward basic and acidic residues.

The protein belongs to the RRM RBM34 family.

It localises to the nucleus. The protein resides in the nucleolus. Its function is as follows. Involved in pre-25S rRNA processing. In Eremothecium gossypii (strain ATCC 10895 / CBS 109.51 / FGSC 9923 / NRRL Y-1056) (Yeast), this protein is Nucleolar protein 12 (NOP12).